The chain runs to 894 residues: Leucine--tRNA ligase, mitochondrial (894 aa).

A mitochondrion-targeting transit peptide spans 1–9 (MLSRPSSRF). The short motif at 56–66 (PYPSGALHIGH) is the 'HIGH' region element. The 'KMSKS' region signature appears at 646-650 (KMSKS). Lysine 649 serves as a coordination point for ATP.

It belongs to the class-I aminoacyl-tRNA synthetase family.

It is found in the mitochondrion matrix. It catalyses the reaction tRNA(Leu) + L-leucine + ATP = L-leucyl-tRNA(Leu) + AMP + diphosphate. Functionally, catalyzes the attachment of leucine to tRNA(Leu) in the mitochondrion. This chain is Leucine--tRNA ligase, mitochondrial (NAM2), found in Saccharomyces cerevisiae (strain ATCC 204508 / S288c) (Baker's yeast).